Reading from the N-terminus, the 450-residue chain is Phospho-2-dehydro-3-deoxyheptonate aldolase (450 aa).

A compositionally biased stretch (polar residues) spans 1 to 13 (MTVNAKTSPSAGN). The segment at 1–20 (MTVNAKTSPSAGNTWRDLPA) is disordered.

The protein belongs to the class-II DAHP synthase family. As to quaternary structure, homodimer.

The enzyme catalyses D-erythrose 4-phosphate + phosphoenolpyruvate + H2O = 7-phospho-2-dehydro-3-deoxy-D-arabino-heptonate + phosphate. The protein operates within metabolic intermediate biosynthesis; chorismate biosynthesis; chorismate from D-erythrose 4-phosphate and phosphoenolpyruvate: step 1/7. In Streptomyces coelicolor (strain ATCC BAA-471 / A3(2) / M145), this protein is Phospho-2-dehydro-3-deoxyheptonate aldolase (aroH).